A 402-amino-acid chain; its full sequence is Uroporphyrinogen decarboxylase 1, chloroplastic (402 aa).

The N-terminal 50 residues, 1–50 (MISATATAAFLAAAPASSSSCTTHRRRSGLPAISASLATASSTEEPLLVR), are a transit peptide targeting the chloroplast. Substrate is bound by residues 67–71 (RQAGR), Phe86, Ser116, Asp117, Tyr193, Ser248, and His363.

The protein belongs to the uroporphyrinogen decarboxylase family. In terms of assembly, homodimer.

It localises to the plastid. Its subcellular location is the chloroplast. It catalyses the reaction uroporphyrinogen III + 4 H(+) = coproporphyrinogen III + 4 CO2. The protein operates within porphyrin-containing compound metabolism; protoporphyrin-IX biosynthesis; coproporphyrinogen-III from 5-aminolevulinate: step 4/4. In terms of biological role, catalyzes the decarboxylation of four acetate groups of uroporphyrinogen-III to yield coproporphyrinogen-III. This Oryza sativa subsp. japonica (Rice) protein is Uroporphyrinogen decarboxylase 1, chloroplastic.